A 238-amino-acid chain; its full sequence is Ribonuclease PH (238 aa).

Residues arginine 86 and 124-126 (GTR) contribute to the phosphate site.

The protein belongs to the RNase PH family. As to quaternary structure, homohexameric ring arranged as a trimer of dimers.

It carries out the reaction tRNA(n+1) + phosphate = tRNA(n) + a ribonucleoside 5'-diphosphate. Phosphorolytic 3'-5' exoribonuclease that plays an important role in tRNA 3'-end maturation. Removes nucleotide residues following the 3'-CCA terminus of tRNAs; can also add nucleotides to the ends of RNA molecules by using nucleoside diphosphates as substrates, but this may not be physiologically important. Probably plays a role in initiation of 16S rRNA degradation (leading to ribosome degradation) during starvation. This Psychrobacter cryohalolentis (strain ATCC BAA-1226 / DSM 17306 / VKM B-2378 / K5) protein is Ribonuclease PH.